Here is a 207-residue protein sequence, read N- to C-terminus: Charged multivesicular body protein 3 (207 aa).

The disordered stretch occupies residues 174–207 (QVSSAPLETHQQEEVVQEKQEDSELLDRLKALKS). Residues 183-207 (HQQEEVVQEKQEDSELLDRLKALKS) are a coiled coil. Basic and acidic residues predominate over residues 183–207 (HQQEEVVQEKQEDSELLDRLKALKS).

This sequence belongs to the SNF7 family. Probable core component of the endosomal sorting required for transport complex III (ESCRT-III).

The protein resides in the endosome membrane. In terms of biological role, probable core component of the endosomal sorting required for transport complex III (ESCRT-III) which is involved in multivesicular bodies (MVBs) formation and sorting of endosomal cargo proteins into MVBs. MVBs contain intraluminal vesicles (ILVs) that are generated by invagination and scission from the limiting membrane of the endosome and are delivered to lysosomes enabling degradation of membrane proteins. This Dictyostelium discoideum (Social amoeba) protein is Charged multivesicular body protein 3 (chmp3).